The primary structure comprises 510 residues: Bifunctional purine biosynthesis protein PurH (510 aa).

The region spanning 1–142 (MRALLSVSDK…KNYKDVMVLC (142 aa)) is the MGS-like domain.

This sequence belongs to the PurH family.

It carries out the reaction (6R)-10-formyltetrahydrofolate + 5-amino-1-(5-phospho-beta-D-ribosyl)imidazole-4-carboxamide = 5-formamido-1-(5-phospho-D-ribosyl)imidazole-4-carboxamide + (6S)-5,6,7,8-tetrahydrofolate. The enzyme catalyses IMP + H2O = 5-formamido-1-(5-phospho-D-ribosyl)imidazole-4-carboxamide. It participates in purine metabolism; IMP biosynthesis via de novo pathway; 5-formamido-1-(5-phospho-D-ribosyl)imidazole-4-carboxamide from 5-amino-1-(5-phospho-D-ribosyl)imidazole-4-carboxamide (10-formyl THF route): step 1/1. It functions in the pathway purine metabolism; IMP biosynthesis via de novo pathway; IMP from 5-formamido-1-(5-phospho-D-ribosyl)imidazole-4-carboxamide: step 1/1. The protein is Bifunctional purine biosynthesis protein PurH of Campylobacter jejuni subsp. doylei (strain ATCC BAA-1458 / RM4099 / 269.97).